The following is a 405-amino-acid chain: Tryptophan synthase beta chain (405 aa).

At K98 the chain carries N6-(pyridoxal phosphate)lysine.

It belongs to the TrpB family. Tetramer of two alpha and two beta chains. Pyridoxal 5'-phosphate serves as cofactor.

It carries out the reaction (1S,2R)-1-C-(indol-3-yl)glycerol 3-phosphate + L-serine = D-glyceraldehyde 3-phosphate + L-tryptophan + H2O. Its pathway is amino-acid biosynthesis; L-tryptophan biosynthesis; L-tryptophan from chorismate: step 5/5. In terms of biological role, the beta subunit is responsible for the synthesis of L-tryptophan from indole and L-serine. In Methylococcus capsulatus (strain ATCC 33009 / NCIMB 11132 / Bath), this protein is Tryptophan synthase beta chain.